Here is a 155-residue protein sequence, read N- to C-terminus: Small ribosomal subunit protein uS7 (155 aa).

This sequence belongs to the universal ribosomal protein uS7 family. In terms of assembly, part of the 30S ribosomal subunit. Contacts proteins S9 and S11.

One of the primary rRNA binding proteins, it binds directly to 16S rRNA where it nucleates assembly of the head domain of the 30S subunit. Is located at the subunit interface close to the decoding center, probably blocks exit of the E-site tRNA. The polypeptide is Small ribosomal subunit protein uS7 (Mycoplasmoides gallisepticum (strain R(low / passage 15 / clone 2)) (Mycoplasma gallisepticum)).